The chain runs to 231 residues: Cytidylate kinase 1 (231 aa).

Residue 7 to 15 (GPSGAGKGT) participates in ATP binding.

The protein belongs to the cytidylate kinase family. Type 1 subfamily.

The protein resides in the cytoplasm. It carries out the reaction CMP + ATP = CDP + ADP. The catalysed reaction is dCMP + ATP = dCDP + ADP. The sequence is that of Cytidylate kinase 1 from Haemophilus influenzae (strain ATCC 51907 / DSM 11121 / KW20 / Rd).